Reading from the N-terminus, the 295-residue chain is Translational activator of cytochrome c oxidase 1 (295 aa).

Lys162 is subject to N6-acetyllysine. Residues 190–225 (VEDREKKAVNLERALELAIEAGAEDVREAEDEEEEK) are a coiled coil.

It belongs to the TACO1 family.

The protein localises to the mitochondrion. Acts as a translational activator of mitochondrially-encoded cytochrome c oxidase 1. The sequence is that of Translational activator of cytochrome c oxidase 1 from Rattus norvegicus (Rat).